The primary structure comprises 483 residues: Probable pectate lyase 12 (483 aa).

Residues 1–24 (MMLQRSCIVLFFSLFLLVPQMVFS) form the signal peptide. Residues Asn-27 and Asn-50 are each glycosylated (N-linked (GlcNAc...) asparagine). Asp-220, Asp-244, and Asp-248 together coordinate Ca(2+). Arg-300 is an active-site residue.

The protein belongs to the polysaccharide lyase 1 family. It depends on Ca(2+) as a cofactor.

It carries out the reaction Eliminative cleavage of (1-&gt;4)-alpha-D-galacturonan to give oligosaccharides with 4-deoxy-alpha-D-galact-4-enuronosyl groups at their non-reducing ends.. The protein operates within glycan metabolism; pectin degradation; 2-dehydro-3-deoxy-D-gluconate from pectin: step 2/5. In Arabidopsis thaliana (Mouse-ear cress), this protein is Probable pectate lyase 12.